The sequence spans 609 residues: MIQALLVAICLAVFPYQGSSIILESGNVNDYEVVYPQKVPALSKGGVQNPQPETKYEDTMQYEFHVNGEPVVLHLERNKGLFSEDYTETHYAPDGREITTSSPVQDHCYYHGYIQNEADSSAVISACDGLKGHFKHQGETYFIEPLELSDSEAHAIYKDENVEEEEEIPKICGVTQTTWESDEPIEKSSQLTNTPEQDRYLQAKKYIEFYVVVDNVMYRKYTGKLHVITRRVYEMVNALNTMYRRLNFHIALIGLEIWSNGNEINVQSDVQATLDLFGEWRENKLLPRKRNDNAQLLTSTEFNGTTTGLGYIGSLCSPKKSVAVVQDHSKSTSMVAITMAHQMGHNLGMNDDRASCTCGSNKCIMSTKYYESLSEFSSCSVQEHREYLLRDRPQCILNKPSRKAIVTPPVCGNYFVERGEECDCGSPEDCQNTCCDAATCKLQHEAQCDSGECCEKCKFKGAGAECRAAKNDCDFPELCTGRSAKCPKDSFQRNGHPCQNNQGYCYNGTCPTLTNQCATLWGPGAKMSPGLCFMLNWNARSCGLCRKENGRKILCAAKDVKCGRLFCKKKNSMICHCPPPSKDPNYGMVAPGTKCGVKKVCRNRQCVKV.

The N-terminal stretch at 1–20 is a signal peptide; sequence MIQALLVAICLAVFPYQGSS. Positions 21–191 are excised as a propeptide; it reads IILESGNVND…DEPIEKSSQL (171 aa). The 196-residue stretch at 205 to 400 folds into the Peptidase M12B domain; it reads KYIEFYVVVD…DRPQCILNKP (196 aa). E208 and D292 together coordinate Ca(2+). Residue N303 is glycosylated (N-linked (GlcNAc...) asparagine). Disulfide bonds link C316-C395, C356-C379, and C358-C363. Zn(2+) contacts are provided by H341 and H345. Ca(2+)-binding residues include C395, N398, V410, N413, F415, E417, E420, and D423. The 87-residue stretch at 408-494 folds into the Disintegrin domain; it reads PPVCGNYFVE…KCPKDSFQRN (87 aa). 14 cysteine pairs are disulfide-bonded: C411-C440, C422-C435, C424-C430, C434-C457, C448-C454, C453-C479, C466-C486, C473-C505, C498-C510, C517-C567, C532-C575, C545-C555, C562-C601, and C595-C606. Positions 472 to 474 match the D/ECD-tripeptide motif; it reads DCD. An N-linked (GlcNAc...) asparagine glycan is attached at N507.

The protein belongs to the venom metalloproteinase (M12B) family. P-III subfamily. P-IIIa sub-subfamily. Monomer. It depends on Zn(2+) as a cofactor. In terms of tissue distribution, expressed by the venom gland.

It localises to the secreted. Its activity is regulated as follows. Inhibited by EDTA and diisopropyl fluorophosphate (DFP). Also inhibited by an excess of zinc or calcium ions. In terms of biological role, snake venom zinc metalloproteinase that inhibits platelet aggregation by cleaving platelet glycoprotein Ib alpha (GP1BA) at Glu-298/Asp-299, and abolishes binding of von Willebrand factor (VWF) to GPIBA. Cleaves P-selectin glycoprotein ligand-1 (PSGL-1/SELPLG) at Tyr-51/Asp-52, and completely abolishes the binding of PSGL-1 to P-selectin. Anionic amino acid sequences containing sulfated tyrosines are needed for cleavages. Inhibits the thrombin-induced platelet aggregation, and the thrombin-induced release of ATP and ADP. Has lectin activity (inhibited by heparin). This chain is Snake venom metalloproteinase-disintegrin-like mocarhagin, found in Naja mossambica (Mozambique spitting cobra).